Consider the following 177-residue polypeptide: NAD(P)H-quinone oxidoreductase subunit 6, chloroplastic (177 aa).

5 helical membrane passes run 10-30 (ILLV…VLLT), 32-52 (PIYS…FYIP), 61-81 (AQLL…VMFM), 92-112 (FWTV…FSLI), and 152-172 (FYLP…GAIA).

Belongs to the complex I subunit 6 family. In terms of assembly, NDH is composed of at least 16 different subunits, 5 of which are encoded in the nucleus.

The protein resides in the plastid. Its subcellular location is the chloroplast thylakoid membrane. It catalyses the reaction a plastoquinone + NADH + (n+1) H(+)(in) = a plastoquinol + NAD(+) + n H(+)(out). The enzyme catalyses a plastoquinone + NADPH + (n+1) H(+)(in) = a plastoquinol + NADP(+) + n H(+)(out). Functionally, NDH shuttles electrons from NAD(P)H:plastoquinone, via FMN and iron-sulfur (Fe-S) centers, to quinones in the photosynthetic chain and possibly in a chloroplast respiratory chain. The immediate electron acceptor for the enzyme in this species is believed to be plastoquinone. Couples the redox reaction to proton translocation, and thus conserves the redox energy in a proton gradient. In Nymphaea alba (White water-lily), this protein is NAD(P)H-quinone oxidoreductase subunit 6, chloroplastic (ndhG).